The primary structure comprises 64 residues: uncharacterized protein (64 aa).

Residues 41 to 61 (VFLALKVLGIMVLFYLLDAII) form a helical membrane-spanning segment.

The protein localises to the membrane. This is an uncharacterized protein from Acheta domesticus (House cricket).